The sequence spans 344 residues: Uroporphyrinogen decarboxylase (344 aa).

Residues 23–27 (RQAGR), Asp-73, Tyr-149, Thr-204, and His-321 contribute to the substrate site.

The protein belongs to the uroporphyrinogen decarboxylase family. In terms of assembly, homodimer.

The protein resides in the cytoplasm. It catalyses the reaction uroporphyrinogen III + 4 H(+) = coproporphyrinogen III + 4 CO2. The protein operates within porphyrin-containing compound metabolism; protoporphyrin-IX biosynthesis; coproporphyrinogen-III from 5-aminolevulinate: step 4/4. Functionally, catalyzes the decarboxylation of four acetate groups of uroporphyrinogen-III to yield coproporphyrinogen-III. The sequence is that of Uroporphyrinogen decarboxylase from Francisella tularensis subsp. holarctica (strain LVS).